A 485-amino-acid chain; its full sequence is Cobyric acid synthase (485 aa).

The GATase cobBQ-type domain maps to 248–435 (RLKVAVAVPP…LHGLFESPAA (188 aa)). Residue Cys329 is the Nucleophile of the active site. His427 is an active-site residue.

It belongs to the CobB/CobQ family. CobQ subfamily.

The protein operates within cofactor biosynthesis; adenosylcobalamin biosynthesis. In terms of biological role, catalyzes amidations at positions B, D, E, and G on adenosylcobyrinic A,C-diamide. NH(2) groups are provided by glutamine, and one molecule of ATP is hydrogenolyzed for each amidation. The chain is Cobyric acid synthase from Azotobacter vinelandii (strain DJ / ATCC BAA-1303).